The chain runs to 216 residues: Protein ADP-ribose pyrophosphatase ORF38 (216 aa).

The Nudix hydrolase domain occupies 1-177 (MRNAAGLFMI…DYSNYIEFFD (177 aa)). A Nudix box motif is present at residues 48 to 70 (GHRDCCDAKVYETAVREFVEETG).

It localises to the host cytoplasm. Its subcellular location is the host nucleus. It catalyses the reaction ADP-D-ribose + H2O = D-ribose 5-phosphate + AMP + 2 H(+). Its function is as follows. Plays an important role in virus replication most probably through its hydrolyzing ADP-ribose activity in host cells. May function in viral DNA replication or transcription directly, or by removing toxic substances or metabolic intermediates. This is Protein ADP-ribose pyrophosphatase ORF38 from Lepidoptera (butterflies and moths).